The sequence spans 84 residues: MSCKKSARQSLYVSLCLFYILVFAAATEVDFYSPECHSHTYEIVLNSFSSIWLLINLFLLLCSFAIFLKYWCYKTFASETVKGY.

The signal sequence occupies residues 1–26 (MSCKKSARQSLYVSLCLFYILVFAAA). Topologically, residues 27–47 (TEVDFYSPECHSHTYEIVLNS) are virion surface. Residues 48–68 (FSSIWLLINLFLLLCSFAIFL) traverse the membrane as a helical segment. At 69–84 (KYWCYKTFASETVKGY) the chain is on the intravirion side.

This sequence belongs to the herpesviridae glycoprotein N family. Interacts (via N-terminus) with gM (via N-terminus). The gM-gN heterodimer forms the gCII complex.

It is found in the virion membrane. It localises to the host membrane. The protein localises to the host Golgi apparatus. The protein resides in the host trans-Golgi network. In terms of biological role, envelope glycoprotein necessary for proper maturation of gM and modulation of its membrane fusion activity. Also plays a critical role in virion morphogenesis. In Homo sapiens (Human), this protein is Envelope glycoprotein N.